We begin with the raw amino-acid sequence, 508 residues long: Photosystem II CP47 reaction center protein (508 aa).

6 consecutive transmembrane segments (helical) span residues 21–36 (AVHI…WAGS), 101–115 (IVFS…IWHW), 140–156 (GIHL…FGAF), 203–218 (IAAG…FHLS), 237–252 (VLSS…AFVV), and 457–472 (TFAL…HGAR).

Belongs to the PsbB/PsbC family. PsbB subfamily. PSII is composed of 1 copy each of membrane proteins PsbA, PsbB, PsbC, PsbD, PsbE, PsbF, PsbH, PsbI, PsbJ, PsbK, PsbL, PsbM, PsbT, PsbX, PsbY, PsbZ, Psb30/Ycf12, at least 3 peripheral proteins of the oxygen-evolving complex and a large number of cofactors. It forms dimeric complexes. Requires Binds multiple chlorophylls. PSII binds additional chlorophylls, carotenoids and specific lipids. as cofactor.

It is found in the plastid. The protein localises to the chloroplast thylakoid membrane. In terms of biological role, one of the components of the core complex of photosystem II (PSII). It binds chlorophyll and helps catalyze the primary light-induced photochemical processes of PSII. PSII is a light-driven water:plastoquinone oxidoreductase, using light energy to abstract electrons from H(2)O, generating O(2) and a proton gradient subsequently used for ATP formation. This Brachypodium distachyon (Purple false brome) protein is Photosystem II CP47 reaction center protein.